The sequence spans 101 residues: Toxin Tpa8 (101 aa).

An N-terminal signal peptide occupies residues 1–20 (MVKSEMKLVIFSLFLLLIGV). Residues 24 to 98 (KNGYPVIEGG…VMDRTKEYCE (75 aa)) form the LCN-type CS-alpha/beta domain. 4 disulfides stabilise this stretch: C44–C70, C56–C75, C60–C77, and C71–C97.

The protein belongs to the long (4 C-C) scorpion toxin superfamily. Sodium channel inhibitor family. Beta subfamily. Expressed by the venom gland.

Its subcellular location is the secreted. Its function is as follows. Excitatory insect beta-toxins induce a spastic paralysis. They bind voltage-independently at site-4 of sodium channels (Nav) and shift the voltage of activation toward more negative potentials thereby affecting sodium channel activation and promoting spontaneous and repetitive firing. This chain is Toxin Tpa8, found in Tityus pachyurus (Colombian scorpion).